The following is a 391-amino-acid chain: Ferrochelatase (391 aa).

Residues H196 and E281 each coordinate Fe cation.

Belongs to the ferrochelatase family.

Its subcellular location is the cytoplasm. The enzyme catalyses heme b + 2 H(+) = protoporphyrin IX + Fe(2+). The protein operates within porphyrin-containing compound metabolism; protoheme biosynthesis; protoheme from protoporphyrin-IX: step 1/1. Functionally, catalyzes the ferrous insertion into protoporphyrin IX. The sequence is that of Ferrochelatase from Prochlorococcus marinus (strain SARG / CCMP1375 / SS120).